The chain runs to 369 residues: Peptide chain release factor 2 (369 aa).

N5-methylglutamine is present on Gln-252.

It belongs to the prokaryotic/mitochondrial release factor family. Post-translationally, methylated by PrmC. Methylation increases the termination efficiency of RF2.

Its subcellular location is the cytoplasm. Peptide chain release factor 2 directs the termination of translation in response to the peptide chain termination codons UGA and UAA. The polypeptide is Peptide chain release factor 2 (Staphylococcus aureus (strain bovine RF122 / ET3-1)).